We begin with the raw amino-acid sequence, 298 residues long: Lipoyl synthase (298 aa).

Cys-40, Cys-45, Cys-51, Cys-67, Cys-71, Cys-74, and Ser-280 together coordinate [4Fe-4S] cluster. The region spanning 53–269 (AVRKTATFMI…KEIALSKGFS (217 aa)) is the Radical SAM core domain.

It belongs to the radical SAM superfamily. Lipoyl synthase family. [4Fe-4S] cluster is required as a cofactor.

The protein localises to the cytoplasm. It catalyses the reaction [[Fe-S] cluster scaffold protein carrying a second [4Fe-4S](2+) cluster] + N(6)-octanoyl-L-lysyl-[protein] + 2 oxidized [2Fe-2S]-[ferredoxin] + 2 S-adenosyl-L-methionine + 4 H(+) = [[Fe-S] cluster scaffold protein] + N(6)-[(R)-dihydrolipoyl]-L-lysyl-[protein] + 4 Fe(3+) + 2 hydrogen sulfide + 2 5'-deoxyadenosine + 2 L-methionine + 2 reduced [2Fe-2S]-[ferredoxin]. It participates in protein modification; protein lipoylation via endogenous pathway; protein N(6)-(lipoyl)lysine from octanoyl-[acyl-carrier-protein]. Catalyzes the radical-mediated insertion of two sulfur atoms into the C-6 and C-8 positions of the octanoyl moiety bound to the lipoyl domains of lipoate-dependent enzymes, thereby converting the octanoylated domains into lipoylated derivatives. The sequence is that of Lipoyl synthase from Bacillus thuringiensis (strain Al Hakam).